The following is a 413-amino-acid chain: Multifunctional CCA protein (413 aa).

Gly8 and Arg11 together coordinate ATP. CTP is bound by residues Gly8 and Arg11. Residues Asp21 and Asp23 each coordinate Mg(2+). Positions 91, 137, and 140 each coordinate ATP. Residues Arg91, Arg137, and Arg140 each coordinate CTP. One can recognise an HD domain in the interval 228–329 (TGVHTLMTLS…VKLFDAIDAW (102 aa)).

The protein belongs to the tRNA nucleotidyltransferase/poly(A) polymerase family. Bacterial CCA-adding enzyme type 1 subfamily. In terms of assembly, monomer. Can also form homodimers and oligomers. Mg(2+) serves as cofactor. The cofactor is Ni(2+).

It carries out the reaction a tRNA precursor + 2 CTP + ATP = a tRNA with a 3' CCA end + 3 diphosphate. The catalysed reaction is a tRNA with a 3' CCA end + 2 CTP + ATP = a tRNA with a 3' CCACCA end + 3 diphosphate. In terms of biological role, catalyzes the addition and repair of the essential 3'-terminal CCA sequence in tRNAs without using a nucleic acid template. Adds these three nucleotides in the order of C, C, and A to the tRNA nucleotide-73, using CTP and ATP as substrates and producing inorganic pyrophosphate. tRNA 3'-terminal CCA addition is required both for tRNA processing and repair. Also involved in tRNA surveillance by mediating tandem CCA addition to generate a CCACCA at the 3' terminus of unstable tRNAs. While stable tRNAs receive only 3'-terminal CCA, unstable tRNAs are marked with CCACCA and rapidly degraded. In Salmonella schwarzengrund (strain CVM19633), this protein is Multifunctional CCA protein.